The sequence spans 23 residues: Caerulein precursor fragment R6 (23 aa).

Expressed by the skin glands.

It localises to the secreted. Functionally, antimicrobial peptide. The polypeptide is Caerulein precursor fragment R6 (Xenopus ruwenzoriensis (Uganda clawed frog)).